Here is a 43-residue protein sequence, read N- to C-terminus: Probable intron-encoded DNA endonuclease 2 (43 aa).

The protein belongs to the LAGLIDADG endonuclease family.

Its subcellular location is the mitochondrion. Functionally, mitochondrial DNA endonuclease involved in intron homing. This Mycosarcoma maydis (Corn smut fungus) protein is Probable intron-encoded DNA endonuclease 2 (hegI2).